Consider the following 180-residue polypeptide: Adenine phosphoribosyltransferase (180 aa).

It belongs to the purine/pyrimidine phosphoribosyltransferase family. In terms of assembly, homodimer.

The protein localises to the cytoplasm. It carries out the reaction AMP + diphosphate = 5-phospho-alpha-D-ribose 1-diphosphate + adenine. The protein operates within purine metabolism; AMP biosynthesis via salvage pathway; AMP from adenine: step 1/1. In terms of biological role, catalyzes a salvage reaction resulting in the formation of AMP, that is energically less costly than de novo synthesis. The chain is Adenine phosphoribosyltransferase from Pasteurella multocida (strain Pm70).